Consider the following 364-residue polypeptide: S-adenosylmethionine:tRNA ribosyltransferase-isomerase (364 aa).

It belongs to the QueA family. Monomer.

It localises to the cytoplasm. It carries out the reaction 7-aminomethyl-7-carbaguanosine(34) in tRNA + S-adenosyl-L-methionine = epoxyqueuosine(34) in tRNA + adenine + L-methionine + 2 H(+). It functions in the pathway tRNA modification; tRNA-queuosine biosynthesis. Its function is as follows. Transfers and isomerizes the ribose moiety from AdoMet to the 7-aminomethyl group of 7-deazaguanine (preQ1-tRNA) to give epoxyqueuosine (oQ-tRNA). This is S-adenosylmethionine:tRNA ribosyltransferase-isomerase from Bradyrhizobium sp. (strain ORS 278).